We begin with the raw amino-acid sequence, 296 residues long: Light-independent protochlorophyllide reductase iron-sulfur ATP-binding protein (296 aa).

Positions 1–20 (MTTTLSRPTDGEGSVQVQQD) are disordered. Residues 39 to 44 (GIGKST) and lysine 68 contribute to the ATP site. Serine 43 serves as a coordination point for Mg(2+). [4Fe-4S] cluster is bound by residues cysteine 124 and cysteine 158. Residue 209–210 (NR) coordinates ATP.

Belongs to the NifH/BchL/ChlL family. Homodimer. Protochlorophyllide reductase is composed of three subunits; ChlL, ChlN and ChlB. [4Fe-4S] cluster serves as cofactor.

It catalyses the reaction chlorophyllide a + oxidized 2[4Fe-4S]-[ferredoxin] + 2 ADP + 2 phosphate = protochlorophyllide a + reduced 2[4Fe-4S]-[ferredoxin] + 2 ATP + 2 H2O. It participates in porphyrin-containing compound metabolism; chlorophyll biosynthesis (light-independent). In terms of biological role, component of the dark-operative protochlorophyllide reductase (DPOR) that uses Mg-ATP and reduced ferredoxin to reduce ring D of protochlorophyllide (Pchlide) to form chlorophyllide a (Chlide). This reaction is light-independent. The L component serves as a unique electron donor to the NB-component of the complex, and binds Mg-ATP. In Synechococcus sp. (strain CC9902), this protein is Light-independent protochlorophyllide reductase iron-sulfur ATP-binding protein.